The following is a 117-amino-acid chain: Ribosome-binding factor A (117 aa).

This sequence belongs to the RbfA family. As to quaternary structure, monomer. Binds 30S ribosomal subunits, but not 50S ribosomal subunits or 70S ribosomes.

It localises to the cytoplasm. In terms of biological role, one of several proteins that assist in the late maturation steps of the functional core of the 30S ribosomal subunit. Associates with free 30S ribosomal subunits (but not with 30S subunits that are part of 70S ribosomes or polysomes). Required for efficient processing of 16S rRNA. May interact with the 5'-terminal helix region of 16S rRNA. The sequence is that of Ribosome-binding factor A from Leptospira interrogans serogroup Icterohaemorrhagiae serovar Lai (strain 56601).